A 96-amino-acid chain; its full sequence is Protein Vpr (96 aa).

Residues 1–42 are homooligomerization; sequence MEQAPEDQGPPREPYQEWALETLEELKNEAVRHFPRPWLHQL. Ser-79 and Ser-96 each carry phosphoserine; by host.

It belongs to the HIV-1 VPR protein family. As to quaternary structure, homooligomer, may form homodimer. Interacts with p6-gag region of the Pr55 Gag precursor protein through a (Leu-X-X)4 motif near the C-terminus of the P6gag protein. Interacts with host UNG. May interact with host RAD23A/HHR23A. Interacts with host VPRBP/DCAF1, leading to hijack the CUL4A-RBX1-DDB1-DCAF1/VPRBP complex, mediating ubiquitination of host proteins such as TERT and ZGPAT and arrest of the cell cycle in G2 phase. Phosphorylated on several residues by host. These phosphorylations regulate VPR activity for the nuclear import of the HIV-1 pre-integration complex.

Its subcellular location is the virion. It is found in the host nucleus. It localises to the host extracellular space. Its function is as follows. During virus replication, may deplete host UNG protein, and incude G2-M cell cycle arrest. Acts by targeting specific host proteins for degradation by the 26S proteasome, through association with the cellular CUL4A-DDB1 E3 ligase complex by direct interaction with host VPRPB/DCAF-1. Cell cycle arrest reportedly occurs within hours of infection and is not blocked by antiviral agents, suggesting that it is initiated by the VPR carried into the virion. Additionally, VPR induces apoptosis in a cell cycle dependent manner suggesting that these two effects are mechanistically linked. Detected in the serum and cerebrospinal fluid of AIDS patient, VPR may also induce cell death to bystander cells. During virus entry, plays a role in the transport of the viral pre-integration (PIC) complex to the host nucleus. This function is crucial for viral infection of non-dividing macrophages. May act directly at the nuclear pore complex, by binding nucleoporins phenylalanine-glycine (FG)-repeat regions. The polypeptide is Protein Vpr (Pan (chimpanzees)).